A 62-amino-acid chain; its full sequence is High-potential iron-sulfur protein (62 aa).

Positions 22, 25, 40, and 55 each coordinate [4Fe-4S] cluster.

Belongs to the high-potential iron-sulfur protein (HiPIP) family. In terms of assembly, homodimer.

Its function is as follows. Specific class of high-redox-potential 4Fe-4S ferredoxins. Functions in anaerobic electron transport in most purple and in some other photosynthetic bacteria and in at least one genus (Paracoccus) of halophilic, denitrifying bacteria. In Rhodocyclus tenuis (Rhodospirillum tenue), this protein is High-potential iron-sulfur protein (hip).